The following is a 576-amino-acid chain: Putative ankyrin repeat protein L86 (576 aa).

ANK repeat units follow at residues 68 to 101, 118 to 147, 159 to 188, 192 to 223, 227 to 260, 264 to 300, 304 to 337, 341 to 373, 377 to 408, 412 to 446, and 448 to 480; these read HGWT…DPNI, TRIN…NVNF, SGGF…NPNI, KGNT…DLNS, KRKT…NPNI, KGNT…NPNI, SGIS…DPNI, QGLT…DPNI, KGKN…NPNA, KGRT…SLTD, and NGKK…TFDV.

The chain is Putative ankyrin repeat protein L86 from Acanthamoeba polyphaga mimivirus (APMV).